A 431-amino-acid chain; its full sequence is Salivary plasminogen activator beta (431 aa).

The N-terminal stretch at Met1–Arg36 is a signal peptide. The EGF-like domain maps to Ala37–Glu75. 12 cysteine pairs are disulfide-bonded: Cys41–Cys52, Cys46–Cys63, Cys65–Cys74, Cys82–Cys163, Cys103–Cys145, Cys134–Cys158, Cys168–Cys299, Cys211–Cys227, Cys219–Cys288, Cys313–Cys388, Cys345–Cys361, and Cys378–Cys406. The region spanning Cys82–Cys163 is the Kringle domain. N-linked (GlcNAc...) asparagine glycosylation is present at Asn139. The region spanning Ser180–Arg430 is the Peptidase S1 domain. Residues His226 and Asp275 each act as charge relay system in the active site. Residue Asn352 is glycosylated (N-linked (GlcNAc...) asparagine). The Charge relay system role is filled by Ser382.

Belongs to the peptidase S1 family. Monomer.

It localises to the secreted. The enzyme catalyses Specific cleavage of Arg-|-Val bond in plasminogen to form plasmin.. Its function is as follows. Probably essential to support the feeding habits of this exclusively haematophagous animal. Probable potent thrombolytic agent. The sequence is that of Salivary plasminogen activator beta from Desmodus rotundus (Vampire bat).